A 383-amino-acid chain; its full sequence is Adaptive-response sensory kinase SasA (383 aa).

Residues 152 to 365 (MVAHELRTPL…CFTFNVPIWQ (214 aa)) form the Histidine kinase domain. Position 155 is a phosphohistidine; by autocatalysis (H155).

In terms of assembly, homooligomerizes. Interacts with KaiC. Participates in the KaiABC clock complex, whose core is composed of a KaiC homohexamer, 6 KaiB and up to 6 KaiA dimers. SasA and KaiB(fs) compete to bind to KaiC.

It catalyses the reaction ATP + protein L-histidine = ADP + protein N-phospho-L-histidine.. Functionally, member of the two-component regulatory system SasA/RpaA involved in genome-wide circadian gene expression. One of several clock output pathways. Participates in the Kai clock protein complex, the main circadian regulator in cyanobacteria, via its interaction with KaiC. KaiC enhances the autophosphorylation activity of SasA, which then transfers its phosphate group to RpaA to activate it. In addition to its output function, recruits fold-shifted KaiB (KaiB(fs)) to KaiC to cooperatively form the KaiB(6):KaiC(6) complex (independent of SasA kinase activity). Required for robustness of the circadian rhythm of gene expression and is involved in clock output, also required for adaptation to light/dark cycles. This is Adaptive-response sensory kinase SasA from Synechococcus sp. (strain CC9311).